Reading from the N-terminus, the 834-residue chain is ABC transporter A family member 11 (834 aa).

The next 7 helical transmembrane spans lie at 35-55 (FFIL…ILNN), 188-208 (MPMI…ILIV), 235-255 (VFDY…LYSF), 269-289 (FLLF…LQFI), 297-319 (NKWL…SVAF), 324-346 (PLIV…LKAL), and 355-375 (SYTI…IYFI). An ABC transporter domain is found at 452–693 (LDKPSIIERC…YGSGYTIDII (242 aa)). 495-502 (GPNGSGKS) contacts ATP. Over residues 779-789 (KQQTNNKSNII) the composition is skewed to polar residues. A disordered region spans residues 779–834 (KQQTNNKSNIINNNNNNNNNNNNNNNNNNNNNNNNNNNNNNNNNTNNNTNNNQLIN). Low complexity predominate over residues 790-834 (NNNNNNNNNNNNNNNNNNNNNNNNNNNNNNNNNTNNNTNNNQLIN).

The protein belongs to the ABC transporter superfamily. ABCA family.

The protein resides in the membrane. This is ABC transporter A family member 11 (abcA11) from Dictyostelium discoideum (Social amoeba).